A 49-amino-acid polypeptide reads, in one-letter code: Large ribosomal subunit protein bL33B (49 aa).

This sequence belongs to the bacterial ribosomal protein bL33 family.

This is Large ribosomal subunit protein bL33B (rpmG2) from Lactococcus lactis subsp. cremoris (Streptococcus cremoris).